A 279-amino-acid chain; its full sequence is Shikimate dehydrogenase (NADP(+)) (279 aa).

Residues S16–S18 and T63 contribute to the shikimate site. Catalysis depends on K67, which acts as the Proton acceptor. N88 and D103 together coordinate shikimate. NADP(+) is bound by residues G128–A132 and M219. Y221 contacts shikimate. G243 is an NADP(+) binding site.

The protein belongs to the shikimate dehydrogenase family. As to quaternary structure, homodimer.

It catalyses the reaction shikimate + NADP(+) = 3-dehydroshikimate + NADPH + H(+). Its pathway is metabolic intermediate biosynthesis; chorismate biosynthesis; chorismate from D-erythrose 4-phosphate and phosphoenolpyruvate: step 4/7. Involved in the biosynthesis of the chorismate, which leads to the biosynthesis of aromatic amino acids. Catalyzes the reversible NADPH linked reduction of 3-dehydroshikimate (DHSA) to yield shikimate (SA). This is Shikimate dehydrogenase (NADP(+)) from Aromatoleum aromaticum (strain DSM 19018 / LMG 30748 / EbN1) (Azoarcus sp. (strain EbN1)).